The primary structure comprises 201 residues: Peptidyl-tRNA hydrolase (201 aa).

Residue Tyr-15 participates in tRNA binding. His-20 functions as the Proton acceptor in the catalytic mechanism. TRNA is bound by residues Tyr-66, Asn-68, and Asn-114.

This sequence belongs to the PTH family. In terms of assembly, monomer.

Its subcellular location is the cytoplasm. It catalyses the reaction an N-acyl-L-alpha-aminoacyl-tRNA + H2O = an N-acyl-L-amino acid + a tRNA + H(+). Functionally, hydrolyzes ribosome-free peptidyl-tRNAs (with 1 or more amino acids incorporated), which drop off the ribosome during protein synthesis, or as a result of ribosome stalling. In terms of biological role, catalyzes the release of premature peptidyl moieties from peptidyl-tRNA molecules trapped in stalled 50S ribosomal subunits, and thus maintains levels of free tRNAs and 50S ribosomes. This chain is Peptidyl-tRNA hydrolase, found in Burkholderia pseudomallei (strain K96243).